The sequence spans 164 residues: 3-dehydroquinate dehydratase (164 aa).

The active-site Proton acceptor is the Y22. N73, H79, and D86 together coordinate substrate. H99 serves as the catalytic Proton donor. Substrate-binding positions include 100-101 (IS) and R110.

This sequence belongs to the type-II 3-dehydroquinase family. As to quaternary structure, homododecamer.

The enzyme catalyses 3-dehydroquinate = 3-dehydroshikimate + H2O. It functions in the pathway metabolic intermediate biosynthesis; chorismate biosynthesis; chorismate from D-erythrose 4-phosphate and phosphoenolpyruvate: step 3/7. Catalyzes a trans-dehydration via an enolate intermediate. The protein is 3-dehydroquinate dehydratase of Aliarcobacter butzleri (strain RM4018) (Arcobacter butzleri).